Reading from the N-terminus, the 420-residue chain is UDP-glucuronic acid decarboxylase 1 (420 aa).

Met1 carries the N-acetylmethionine modification. Topologically, residues 1–19 are cytoplasmic; that stretch reads MVSKGLLRLVSSVNRRRMK. A helical; Signal-anchor for type II membrane protein transmembrane segment spans residues 20 to 40; it reads LLLGIALFAYAASVWGNFVNM. Residues 41-420 lie on the Lumenal side of the membrane; it reads RSIQENGELK…RVKKGRTRHS (380 aa). Thr94 carries the phosphothreonine modification. Gly98, Phe99, Val100, Asp119, Asn120, Phe122, Thr123, Gly124, Asp144, and Val145 together coordinate NAD(+). UDP-alpha-D-glucuronate-binding residues include Leu149 and Tyr150. Leu159 and Ser161 together coordinate NAD(+). Position 177 (Lys177) interacts with UDP-alpha-D-glucuronate. Residue Thr178 participates in NAD(+) binding. UDP-alpha-D-glucuronate contacts are provided by Asn185, Gly188, Lys191, and Arg192. NAD(+) contacts are provided by Ala200, Tyr231, and Lys235. The Proton acceptor role is filled by Tyr231. Residues Tyr245, Gln248, and Glu249 each contribute to the UDP-alpha-D-glucuronate site. NAD(+)-binding residues include Thr261, His267, and Arg272. Asn316 is a glycosylation site (N-linked (GlcNAc...) asparagine).

This sequence belongs to the NAD(P)-dependent epimerase/dehydratase family. UDP-glucuronic acid decarboxylase subfamily. As to quaternary structure, homodimer and homotetramer. Interacts with AKT1. Requires NAD(+) as cofactor.

It is found in the golgi apparatus. The protein resides in the golgi stack membrane. The catalysed reaction is UDP-alpha-D-glucuronate + H(+) = UDP-alpha-D-xylose + CO2. The protein operates within nucleotide-sugar biosynthesis; UDP-alpha-D-xylose biosynthesis; UDP-alpha-D-xylose from UDP-alpha-D-glucuronate: step 1/1. In terms of biological role, catalyzes the NAD-dependent decarboxylation of UDP-glucuronic acid to UDP-xylose. Necessary for the biosynthesis of the core tetrasaccharide in glycosaminoglycan biosynthesis. The protein is UDP-glucuronic acid decarboxylase 1 (Uxs1) of Mus musculus (Mouse).